The following is a 205-amino-acid chain: Ribosome maturation factor RimP (205 aa).

The protein belongs to the RimP family.

The protein resides in the cytoplasm. Its function is as follows. Required for maturation of 30S ribosomal subunits. The protein is Ribosome maturation factor RimP of Sinorhizobium medicae (strain WSM419) (Ensifer medicae).